We begin with the raw amino-acid sequence, 627 residues long: Carnitine O-acetyltransferase (627 aa).

Residues M1–Q30 constitute a propeptide that is removed on maturation. K94 is subject to N6-succinyllysine. K262 carries the post-translational modification N6-acetyllysine; alternate. Residue K262 is modified to N6-succinyllysine; alternate. Position 269 is an N6-acetyllysine (K269). The Proton acceptor role is filled by H344. CoA-binding positions include K420 and K424–D431. The (R)-carnitine site is built by Y453 and S455. S457 provides a ligand contact to CoA. (R)-carnitine is bound at residue T466. Q556 provides a ligand contact to CoA. Positions S625–L627 match the Microbody targeting signal motif.

It belongs to the carnitine/choline acetyltransferase family. In terms of assembly, monomer.

It localises to the endoplasmic reticulum. It is found in the peroxisome. The protein localises to the mitochondrion inner membrane. The enzyme catalyses (R)-carnitine + acetyl-CoA = O-acetyl-(R)-carnitine + CoA. It carries out the reaction propanoyl-CoA + (R)-carnitine = O-propanoyl-(R)-carnitine + CoA. It catalyses the reaction butanoyl-CoA + (R)-carnitine = O-butanoyl-(R)-carnitine + CoA. The catalysed reaction is hexanoyl-CoA + (R)-carnitine = O-hexanoyl-(R)-carnitine + CoA. The enzyme catalyses octanoyl-CoA + (R)-carnitine = O-octanoyl-(R)-carnitine + CoA. It carries out the reaction decanoyl-CoA + (R)-carnitine = O-decanoyl-(R)-carnitine + CoA. It catalyses the reaction 3-methylbutanoyl-CoA + (R)-carnitine = O-3-methylbutanoyl-(R)-carnitine + CoA. The catalysed reaction is 2-methylpropanoyl-CoA + (R)-carnitine = O-isobutanoyl-(R)-carnitine + CoA. The enzyme catalyses 2-methylbutanoyl-CoA + (R)-carnitine = O-2-methylbutanoyl-(R)-carnitine + CoA. It carries out the reaction acetoacetyl-CoA + (R)-carnitine = O-3-oxobutanoyl-(R)-carnitine + CoA. It catalyses the reaction 3-hydroxybutanoyl-CoA + (R)-carnitine = O-3-hydroxybutanoyl-(R)-carnitine + CoA. The catalysed reaction is 4,8-dimethylnonanoyl-CoA + (R)-carnitine = O-4,8-dimethylnonanoyl-(R)-carnitine + CoA. The enzyme catalyses 2,6-dimethylheptanoyl-CoA + (R)-carnitine = O-2,6-dimethylheptanoyl-(R)-carnitine + CoA. In terms of biological role, catalyzes the reversible transfer of acyl groups from carnitine to coenzyme A (CoA) and regulates the acyl-CoA/CoA ratio. Also plays a crucial role in the transport of fatty acids for beta-oxidation. Responsible for the synthesis of short- and branched-chain acylcarnitines. Active towards some branched-chain amino acid oxidation pathway (BCAAO) intermediates. Trans-2-enoyl-CoAs and 2-methylacyl-CoAs are poor substrates. The sequence is that of Carnitine O-acetyltransferase (CRAT) from Columba livia (Rock dove).